The primary structure comprises 77 residues: Liver-expressed antimicrobial peptide 2 (77 aa).

A signal peptide spans 1-22; sequence MWHLKLFAVLVICLLLAVQVHG. A propeptide spanning residues 23 to 37 is cleaved from the precursor; that stretch reads SPIPELSSAKRRPRR. Intrachain disulfides connect Cys54-Cys65 and Cys60-Cys70.

This sequence belongs to the LEAP2 family.

Its subcellular location is the secreted. Its function is as follows. Has an antimicrobial activity. In Sus scrofa (Pig), this protein is Liver-expressed antimicrobial peptide 2 (LEAP2).